The primary structure comprises 219 residues: MSIQVFCDFDGTITNNDNIMSIMEKFAPPEAEEVKNRILSQELSIQEGVSQLFQLIPTNLHDEIIQFLIETAEIRNGFHEFIQFVNENNISFYVISGGMDFFVYPLLQGLIPKEQIYCNETDFSNEYITVNWPHPCDRLCQNHCGLCKSSLIRKLSDTNDFHIVIGDSITDLQAAKQADKVFARDFLITKCEENHISYTPFETFHDVKTELKHLLEVKL.

It belongs to the HAD-like hydrolase superfamily. MtnX family.

It carries out the reaction 2-hydroxy-5-methylsulfanyl-3-oxopent-1-enyl phosphate + H2O = 1,2-dihydroxy-5-(methylsulfanyl)pent-1-en-3-one + phosphate. Its pathway is amino-acid biosynthesis; L-methionine biosynthesis via salvage pathway; L-methionine from S-methyl-5-thio-alpha-D-ribose 1-phosphate: step 4/6. In terms of biological role, dephosphorylates 2-hydroxy-3-keto-5-methylthiopentenyl-1-phosphate (HK-MTPenyl-1-P) yielding 1,2-dihydroxy-3-keto-5-methylthiopentene (DHK-MTPene). In Bacillus anthracis (strain A0248), this protein is 2-hydroxy-3-keto-5-methylthiopentenyl-1-phosphate phosphatase.